Here is a 158-residue protein sequence, read N- to C-terminus: Large ribosomal subunit protein uL16 (158 aa).

The protein belongs to the universal ribosomal protein uL16 family. As to quaternary structure, part of the 50S ribosomal subunit.

Its function is as follows. Binds 23S rRNA and is also seen to make contacts with the A and possibly P site tRNAs. This chain is Large ribosomal subunit protein uL16, found in Prochlorococcus marinus (strain MIT 9313).